Reading from the N-terminus, the 249-residue chain is Transcription repressor MYB5 (249 aa).

2 consecutive HTH myb-type domains span residues 20–72 and 73–127; these read KMGM…MNYL and RPSV…RKKL. 2 consecutive DNA-binding regions (H-T-H motif) follow at residues 48-72 and 100-123; these read WRSLPKRAGLLRCGKSCRLRWMNYL and WSLIAGRIPGRTDNEIKNYWNTHL. The segment at 133–180 is disordered; it reads DPQTHKPLDANNIHKPEEEVSGGQKYPLEPISSSHTDDTTVNGGDGDS. Residues 135–150 show a composition bias toward basic and acidic residues; it reads QTHKPLDANNIHKPEE.

In terms of assembly, interacts with BHLH002/EGL3/MYC146, BHLH012/MYC1 and BHLH042/TT8. Siliques.

Its subcellular location is the nucleus. Functionally, transcription activator, when associated with BHLH002/EGL3/MYC146, BHLH012/MYC1 or BHLH042/TT8. The chain is Transcription repressor MYB5 (MYB5) from Arabidopsis thaliana (Mouse-ear cress).